Consider the following 1228-residue polypeptide: DNA repair protein rad5 (1228 aa).

Disordered stretches follow at residues 1 to 96, 194 to 242, 280 to 302, and 445 to 474; these read MDRH…GTLT, PPVR…VLPS, QPPT…PRVS, and KAMD…QELE. Positions 34–43 are enriched in low complexity; it reads PSSSPQFSAP. A compositionally biased stretch (acidic residues) spans 70-83; that stretch reads HNDDDDDDDDDDDE. Polar residues predominate over residues 211–237; it reads PKKSSTSQARSRSHAQAQPQPQSNTPT. Residues 445–454 show a composition bias toward basic and acidic residues; that stretch reads KAMDKAKAGD. Residues 465–474 show a composition bias toward acidic residues; sequence EEAEEGQELE. A Helicase ATP-binding domain is found at 574–784; the sequence is PKQEQHCLGG…FSLVRFLRVE (211 aa). 587 to 594 contacts ATP; it reads DEMGLGKT. Positions 735–738 match the DEAH box motif; sequence DEAH. Residues 967 to 1012 form an RING-type zinc finger; that stretch reads CPICAEEPMIDQAVTGCWHSACKKCLLDYIKHQTDRNEVPRCFQCR. The Helicase C-terminal domain occupies 1060 to 1216; the sequence is ALISHLRTLR…MMSDEEKKMQ (157 aa).

Belongs to the SNF2/RAD54 helicase family.

The protein resides in the cytoplasm. It is found in the nucleus. Functionally, probable helicase, member of the UBC2/RAD6 epistasis group. Functions with DNA repair protein uvs-2/rad18 in error-free postreplication DNA repair. Involved in the maintenance of wild-type rates of instability of simple repetitive sequences such as poly(GT) repeats. Seems to be involved in maintaining a balance which acts in favor of error-prone non-homologous joining during DNA double-strand breaks repairs. This is DNA repair protein rad5 (mus-41) from Neurospora crassa (strain ATCC 24698 / 74-OR23-1A / CBS 708.71 / DSM 1257 / FGSC 987).